The primary structure comprises 695 residues: Elongation factor G 1 (695 aa).

In terms of domain architecture, tr-type G spans 6 to 284 (SKVRNIGISA…AVETYLPCPT (279 aa)). Residues 15–22 (AHIDSGKT), 82–86 (DTPGH), and 136–139 (NKCD) each bind GTP.

The protein belongs to the TRAFAC class translation factor GTPase superfamily. Classic translation factor GTPase family. EF-G/EF-2 subfamily.

The protein localises to the cytoplasm. Catalyzes the GTP-dependent ribosomal translocation step during translation elongation. During this step, the ribosome changes from the pre-translocational (PRE) to the post-translocational (POST) state as the newly formed A-site-bound peptidyl-tRNA and P-site-bound deacylated tRNA move to the P and E sites, respectively. Catalyzes the coordinated movement of the two tRNA molecules, the mRNA and conformational changes in the ribosome. This Desulfotalea psychrophila (strain LSv54 / DSM 12343) protein is Elongation factor G 1.